Reading from the N-terminus, the 144-residue chain is 3-hydroxyacyl-[acyl-carrier-protein] dehydratase FabZ (144 aa).

Histidine 47 is a catalytic residue.

Belongs to the thioester dehydratase family. FabZ subfamily.

The protein resides in the cytoplasm. It carries out the reaction a (3R)-hydroxyacyl-[ACP] = a (2E)-enoyl-[ACP] + H2O. Its function is as follows. Involved in unsaturated fatty acids biosynthesis. Catalyzes the dehydration of short chain beta-hydroxyacyl-ACPs and long chain saturated and unsaturated beta-hydroxyacyl-ACPs. The chain is 3-hydroxyacyl-[acyl-carrier-protein] dehydratase FabZ from Alcanivorax borkumensis (strain ATCC 700651 / DSM 11573 / NCIMB 13689 / SK2).